Reading from the N-terminus, the 521-residue chain is Zinc finger CCCH domain-containing protein 45 (521 aa).

Disordered stretches follow at residues 28–60, 142–185, and 296–319; these read TEDSPANVASQPQRHSYPSRKPRGPDLPPGFEG, TPAI…PLCS, and SRSFTNPERRVSPPKPVNGSISPP. The span at 34–43 shows a compositional bias: polar residues; the sequence is NVASQPQRHS. Low complexity predominate over residues 159–168; that stretch reads EESSNSKVES. Residues 170 to 185 are compositionally biased toward polar residues; that stretch reads VTANKQGQLETKPLCS. The C3H1-type zinc-finger motif lies at 469-497; it reads NKIHQQCIYFGTANGCNMGDSCTYVHDRY.

The chain is Zinc finger CCCH domain-containing protein 45 from Arabidopsis thaliana (Mouse-ear cress).